The primary structure comprises 287 residues: Large ribosomal subunit protein uL2 (287 aa).

A disordered region spans residues 221-287 (RGSVMNPCDH…SKRSRGGRDS (67 aa)). Residues 271–287 (LRKRRKTSKRSRGGRDS) show a composition bias toward basic residues.

Belongs to the universal ribosomal protein uL2 family. In terms of assembly, part of the 50S ribosomal subunit. Forms a bridge to the 30S subunit in the 70S ribosome.

In terms of biological role, one of the primary rRNA binding proteins. Required for association of the 30S and 50S subunits to form the 70S ribosome, for tRNA binding and peptide bond formation. It has been suggested to have peptidyltransferase activity; this is somewhat controversial. Makes several contacts with the 16S rRNA in the 70S ribosome. The polypeptide is Large ribosomal subunit protein uL2 (Synechococcus sp. (strain CC9605)).